A 74-amino-acid polypeptide reads, in one-letter code: UPF0346 protein LCA_0996 (74 aa).

It belongs to the UPF0346 family.

This is UPF0346 protein LCA_0996 from Latilactobacillus sakei subsp. sakei (strain 23K) (Lactobacillus sakei subsp. sakei).